The chain runs to 308 residues: uncharacterized protein (308 aa).

5 helical membrane-spanning segments follow: residues G46–Q66, L82–M102, A159–F179, F190–L210, and L271–F291.

This sequence belongs to the oxidase-dependent Fe transporter (OFeT) (TC 9.A.10.1) family.

The protein localises to the cell membrane. This is an uncharacterized protein from Synechocystis sp. (strain ATCC 27184 / PCC 6803 / Kazusa).